We begin with the raw amino-acid sequence, 78 residues long: cAMP-dependent protein kinase inhibitor beta (78 aa).

Basic and acidic residues predominate over residues 1 to 10 (MRTDSSKMTD). Positions 1 to 78 (MRTDSSKMTD…QLEKPQNEEK (78 aa)) are disordered. Residues 33 to 42 (IQSSAATDGT) show a composition bias toward polar residues. Basic and acidic residues predominate over residues 53-78 (SVKEDAKEKDEKTTQDQLEKPQNEEK).

It belongs to the PKI family.

Its function is as follows. Extremely potent competitive inhibitor of cAMP-dependent protein kinase activity, this protein interacts with the catalytic subunit of the enzyme after the cAMP-induced dissociation of its regulatory chains. This is cAMP-dependent protein kinase inhibitor beta (PKIB) from Homo sapiens (Human).